The sequence spans 372 residues: Cytochrome b (372 aa).

The next 4 helical transmembrane spans lie at 25 to 45 (FGSM…FLAI), 69 to 90 (WIMQ…YTHI), 105 to 125 (WLSG…GYVL), and 170 to 190 (FFAL…IHIM). Heme b-binding residues include H75 and H89. Residues H174 and H188 each coordinate heme b. H193 contacts a ubiquinone. 4 helical membrane passes run 218–238 (YKDM…MSFM), 280–300 (LGGT…PFTH), 312–332 (ITQV…WTAT), and 339–358 (FILI…IIHP).

It belongs to the cytochrome b family. As to quaternary structure, the cytochrome bc1 complex contains 3 respiratory subunits (MT-CYB, CYC1 and UQCRFS1), 2 core proteins (UQCRC1 and UQCRC2) and probably 6 low-molecular weight proteins. Heme b is required as a cofactor.

It is found in the mitochondrion inner membrane. Its function is as follows. Component of the ubiquinol-cytochrome c reductase complex (complex III or cytochrome b-c1 complex) that is part of the mitochondrial respiratory chain. The b-c1 complex mediates electron transfer from ubiquinol to cytochrome c. Contributes to the generation of a proton gradient across the mitochondrial membrane that is then used for ATP synthesis. This is Cytochrome b (MT-CYB) from Pseudechis australis (Mulga snake).